A 408-amino-acid chain; its full sequence is Secreted effector protein SseJ (408 aa).

The active-site Nucleophile is the Ser-151. Active-site residues include Asp-381 and His-384.

This sequence belongs to the 'GDSL' lipolytic enzyme family. In terms of assembly, interacts with RhoA and indirectly with SifA.

Its subcellular location is the secreted. It localises to the host cytoplasm. In terms of biological role, effector proteins function to alter host cell physiology and promote bacterial survival in host tissues. This protein is required for endosomal tubulation and negatively regulates the formation of Salmonella-induced filaments (Sifs) in epithelial cells. Has both deacylase and esterification activities in vitro, but esterification is probably the dominant activity in host cells. Significantly contributes to cholesterol esterification, which reduces cellular cholesterol in cells and abrogates the ability of SifA to associate with cholesterol and LAMP-1 vesicles. The chain is Secreted effector protein SseJ (sseJ) from Salmonella typhimurium (strain LT2 / SGSC1412 / ATCC 700720).